The primary structure comprises 1027 residues: Contactin-5 (1027 aa).

Residues 1 to 19 form the signal peptide; sequence MMWLSWKLFLFLSLIGCLS. Ig-like C2-type domains lie at 32 to 117, 123 to 209, 227 to 307, 317 to 401, 407 to 494, and 498 to 593; these read PDDV…AVLQ, NFSG…RVLS, PKIE…RNVF, PQWV…AELK, PTFP…ASVS, and PTRI…TELL. Cysteine 50 and cysteine 100 are joined by a disulfide. Asparagine 65 and asparagine 123 each carry an N-linked (GlcNAc...) asparagine glycan. 2 disulfides stabilise this stretch: cysteine 144–cysteine 196 and cysteine 249–cysteine 296. Asparagine 324, asparagine 376, and asparagine 467 each carry an N-linked (GlcNAc...) asparagine glycan. 3 cysteine pairs are disulfide-bonded: cysteine 338/cysteine 385, cysteine 430/cysteine 478, and cysteine 520/cysteine 577. 4 Fibronectin type-III domains span residues 600 to 698, 703 to 800, 805 to 899, and 901 to 994; these read PPGV…TNEA, PPAN…SAEG, APID…TKKS, and PSQA…SYAG. N-linked (GlcNAc...) asparagine glycosylation is found at asparagine 706, asparagine 743, asparagine 858, and asparagine 929. The GPI-anchor amidated serine moiety is linked to residue serine 999. The propeptide at 1000–1027 is removed in mature form; that stretch reads AQSTLHMFSTSSSSVTLLLVLMVPSTSW.

This sequence belongs to the immunoglobulin superfamily. Contactin family. As to quaternary structure, interacts with INgCAM/L1 and the tenascin-R TNP protein. Does not interacts with NrCAM. In terms of tissue distribution, expressed by subpopulations of Purkinje cells in the cerebellum. Also expressed by one type of Purkinje cell afferents, the climbing fibers.

It is found in the cell membrane. In terms of biological role, contactins mediate cell surface interactions during nervous system development. May contribute to the formation of somatotopic maps of cerebellar afferents during the development of the nervous system. This chain is Contactin-5 (CNTN5), found in Gallus gallus (Chicken).